A 367-amino-acid chain; its full sequence is Phosphoribosylaminoimidazole-succinocarboxamide synthase (367 aa).

It belongs to the SAICAR synthetase family.

The enzyme catalyses 5-amino-1-(5-phospho-D-ribosyl)imidazole-4-carboxylate + L-aspartate + ATP = (2S)-2-[5-amino-1-(5-phospho-beta-D-ribosyl)imidazole-4-carboxamido]succinate + ADP + phosphate + 2 H(+). It participates in purine metabolism; IMP biosynthesis via de novo pathway; 5-amino-1-(5-phospho-D-ribosyl)imidazole-4-carboxamide from 5-amino-1-(5-phospho-D-ribosyl)imidazole-4-carboxylate: step 1/2. The sequence is that of Phosphoribosylaminoimidazole-succinocarboxamide synthase from Saccharophagus degradans (strain 2-40 / ATCC 43961 / DSM 17024).